The primary structure comprises 622 residues: Polygalacturonase 1 beta-like protein 1 (622 aa).

A signal peptide spans 1–21 (MRKQFVFLLPFLSRLYHVVIA). The FXXY 1 repeat unit spans residues 118-121 (FSVY). N-linked (GlcNAc...) asparagine glycosylation occurs at N125. FXXY repeat units follow at residues 126–129 (FTNY), 140–143 (FKKY), 154–157 (FRRY), 168–171 (FTGY), 182–185 (FNSY), 196–199 (FKNY), 210–213 (FKAY), 224–227 (FKTY), 239–242 (FTSY), 253–256 (FSSY), and 267–270 (FSNY). N278 is a glycosylation site (N-linked (GlcNAc...) asparagine). 7 FXXY repeats span residues 281 to 284 (FKGY), 295 to 298 (FKSY), 309 to 312 (FLNY), 323 to 326 (FSSY), 337 to 340 (FVNY), 351 to 354 (FSGY), and 365 to 368 (FKTY). N371 is a glycosylation site (N-linked (GlcNAc...) asparagine). 2 FXXY repeats span residues 374-377 (FKDY) and 384-387 (FAKY). Residues N388 and N461 are each glycosylated (N-linked (GlcNAc...) asparagine). The BURP domain maps to 407-621 (FFRESMLKEG…FENDMNWAIA (215 aa)).

As to expression, expressed in flowers and stems.

The protein localises to the secreted. It localises to the extracellular space. It is found in the apoplast. The protein resides in the cell wall. In terms of biological role, involved in cell size determination. This Arabidopsis thaliana (Mouse-ear cress) protein is Polygalacturonase 1 beta-like protein 1.